We begin with the raw amino-acid sequence, 412 residues long: Non-specific lipid-transfer protein-like 2 (412 aa).

The Microbody targeting signal signature appears at 410-412 (SKI).

This sequence belongs to the thiolase-like superfamily. Thiolase family. In terms of tissue distribution, expressed in intestine, hypodermis and body-wall muscle.

Its subcellular location is the peroxisome. The catalysed reaction is choloyl-CoA + propanoyl-CoA = 3alpha,7alpha,12alpha-trihydroxy-24-oxo-5beta-cholestan-26-oyl-CoA + CoA. Its activity is regulated as follows. Inhibited by acetyl-CoA. Its function is as follows. Catalyzes the thiolytic cleavage of 3-ketoacyl-CoA with 8-16 carbon residues in the acyl group using a ping-pong mechanism whereby binding to 3-ketooctanoyl-CoA results in the release of acetyl-CoA and the subsequent addition of CoA produces 3-ketohexanohyl-CoA. Involved in the biosynthesis of the dauer pheromone by providing short chains of fatty acid that are attached to the ascarylose sugars of the pheromone. This chain is Non-specific lipid-transfer protein-like 2, found in Caenorhabditis elegans.